The primary structure comprises 736 residues: 3',5'-cyclic-AMP phosphodiesterase 4B (736 aa).

Disordered stretches follow at residues 51–77 (QLPPLSQRQSERARTPEGDGISRPTTL) and 96–116 (DVENGPSPGRSPLDPQASSSS). Ser-56 carries the phosphoserine modification. The residue at position 290 (Ser-290) is a Phosphoserine. The PDEase domain maps to 330–659 (VNTENEDHLA…NWYQSMIPQS (330 aa)). Catalysis depends on His-406, which acts as the Proton donor. His-406 is a binding site for 3',5'-cyclic AMP. AMP-binding residues include His-406 and His-410. Zn(2+)-binding residues include His-410, His-446, Asp-447, and Asp-564. The AMP site is built by Asp-447, Asp-564, Gln-615, and Phe-618. Asp-447 is a binding site for Mg(2+). Mn(2+) is bound at residue Asp-447. 3',5'-cyclic AMP contacts are provided by Gln-615 and Phe-618. 2 positions are modified to phosphoserine: Ser-659 and Ser-661. A disordered region spans residues 685-736 (EEEDSEGPEKEGEGPNYFSSTKTLCVIDPENRDSLEETDIDIATEDKSLIDT).

Belongs to the cyclic nucleotide phosphodiesterase family. PDE4 subfamily. As to quaternary structure, interacts with DISC1. The cofactor is Zn(2+). It depends on Mg(2+) as a cofactor. Mn(2+) serves as cofactor. As to expression, widely expressed. In terms of tissue distribution, expressed in brain, heart, lung and liver. Expressed in liver and brain.

Its subcellular location is the cytoplasm. The protein localises to the cell membrane. The catalysed reaction is 3',5'-cyclic AMP + H2O = AMP + H(+). It participates in purine metabolism; 3',5'-cyclic AMP degradation; AMP from 3',5'-cyclic AMP: step 1/1. Inhibited by rolipram. Its function is as follows. Hydrolyzes the second messenger cAMP, which is a key regulator of many important physiological processes. This Rattus norvegicus (Rat) protein is 3',5'-cyclic-AMP phosphodiesterase 4B.